A 231-amino-acid polypeptide reads, in one-letter code: MQDSPKLTARQQQILDLIQSTIERTGAPPTRAEIATEFGFRSANAAEEHLQALARKGVIELLGGTSRGIRLKSDTLRSINESRLRGIGQQFSLPLSNMPPAQLTLPLVGRVAAGSPILAQQHIDQSYTFEAHMFSRKPDFLLKVRGMSMRDAGILDGDLIAVQRASEAKNGQIVVARLGDEVTVKRWRRSKSGIDLIPENPDFDIIHVPADSPDFALEGLAVGLIRNTMLM.

The segment at residues 31-51 (RAEIATEFGFRSANAAEEHLQ) is a DNA-binding region (H-T-H motif). Active-site for autocatalytic cleavage activity residues include Ser-148 and Lys-185.

The protein belongs to the peptidase S24 family. As to quaternary structure, homodimer.

The enzyme catalyses Hydrolysis of Ala-|-Gly bond in repressor LexA.. Functionally, represses a number of genes involved in the response to DNA damage (SOS response), including recA and lexA. In the presence of single-stranded DNA, RecA interacts with LexA causing an autocatalytic cleavage which disrupts the DNA-binding part of LexA, leading to derepression of the SOS regulon and eventually DNA repair. The sequence is that of LexA repressor from Leptothrix cholodnii (strain ATCC 51168 / LMG 8142 / SP-6) (Leptothrix discophora (strain SP-6)).